We begin with the raw amino-acid sequence, 582 residues long: DNA mismatch repair protein MutL (582 aa).

Belongs to the DNA mismatch repair MutL/HexB family.

Functionally, this protein is involved in the repair of mismatches in DNA. It is required for dam-dependent methyl-directed DNA mismatch repair. May act as a 'molecular matchmaker', a protein that promotes the formation of a stable complex between two or more DNA-binding proteins in an ATP-dependent manner without itself being part of a final effector complex. The protein is DNA mismatch repair protein MutL of Buchnera aphidicola subsp. Schizaphis graminum (strain Sg).